Reading from the N-terminus, the 106-residue chain is ATP synthase-coupling factor 6, mitochondrial (106 aa).

It belongs to the eukaryotic ATPase subunit F6 family. In terms of assembly, F-type ATPases have 2 components, CF(1) - the catalytic core - and CF(0) - the membrane proton channel. CF(0) seems to have nine subunits: a, b, c, d, e, f, g, F6 and 8 (or A6L).

Its subcellular location is the mitochondrion. The protein resides in the mitochondrion inner membrane. Its function is as follows. Mitochondrial membrane ATP synthase (F(1)F(0) ATP synthase or Complex V) produces ATP from ADP in the presence of a proton gradient across the membrane which is generated by electron transport complexes of the respiratory chain. F-type ATPases consist of two structural domains, F(1) - containing the extramembraneous catalytic core and F(0) - containing the membrane proton channel, linked together by a central stalk and a peripheral stalk. During catalysis, ATP synthesis in the catalytic domain of F(1) is coupled via a rotary mechanism of the central stalk subunits to proton translocation. Part of the complex F(0) domain and the peripheric stalk, which acts as a stator to hold the catalytic alpha(3)beta(3) subcomplex and subunit a/ATP6 static relative to the rotary elements. In Drosophila melanogaster (Fruit fly), this protein is ATP synthase-coupling factor 6, mitochondrial.